Reading from the N-terminus, the 71-residue chain is Allergen Art v 2 (71 aa).

Post-translationally, glycosylated. High-mannose oligosaccharides (Man(5-9)GlcNAc(2)).

The chain is Allergen Art v 2 from Artemisia vulgaris (Mugwort).